A 562-amino-acid chain; its full sequence is Valerena-4,7(11)-diene synthase (562 aa).

D314, D318, and E467 together coordinate Mg(2+). The DDXXD motif motif lies at 314 to 318 (DDTYD).

Belongs to the terpene synthase family. Requires Mg(2+) as cofactor. As to expression, predominantly expressed in root.

The catalysed reaction is (2E,6E)-farnesyl diphosphate = valerena-4,7(11)-diene + diphosphate. In terms of biological role, catalyzes formation of valerena-4,7(11)-diene, one of the active ingredients responsible for the sedative effect extracted from Valeriana officinalis root. This chain is Valerena-4,7(11)-diene synthase (TPS2), found in Valeriana officinalis (Valerian).